We begin with the raw amino-acid sequence, 325 residues long: 2-dehydro-3-deoxygluconokinase (325 aa).

Residues 49 to 53 (GSEAN), Y105, 121 to 123 (YYR), and R181 contribute to the substrate site. ATP is bound by residues 179–181 (NIR), 240–245 (KLGAEG), and 269–272 (GAGD). Substrate is bound by residues D272 and D308. D272 functions as the Proton acceptor in the catalytic mechanism.

It belongs to the carbohydrate kinase PfkB family. As to quaternary structure, homohexamer; trimer of dimers.

It catalyses the reaction 2-dehydro-3-deoxy-D-gluconate + ATP = 2-dehydro-3-deoxy-6-phospho-D-gluconate + ADP + H(+). It functions in the pathway carbohydrate acid metabolism; 2-dehydro-3-deoxy-D-gluconate degradation; D-glyceraldehyde 3-phosphate and pyruvate from 2-dehydro-3-deoxy-D-gluconate: step 1/2. Functionally, involved in the degradation of glucose via the semi-phosphorylative Entner-Doudoroff pathway. Catalyzes the phosphorylation of 2-keto-3-deoxygluconate (KDG) yielding 2-keto-3-deoxy-6-phosphogluconate (KDPG). The protein is 2-dehydro-3-deoxygluconokinase (kdgK) of Thermoproteus tenax.